Consider the following 103-residue polypeptide: Small ribosomal subunit protein uS14c (103 aa).

It belongs to the universal ribosomal protein uS14 family. Part of the 30S ribosomal subunit.

Its subcellular location is the plastid. The protein localises to the chloroplast. Functionally, binds 16S rRNA, required for the assembly of 30S particles. The polypeptide is Small ribosomal subunit protein uS14c (Lolium perenne (Perennial ryegrass)).